We begin with the raw amino-acid sequence, 466 residues long: Prophage integrase IntF (466 aa).

Residues 134 to 239 (KTKVTFSVAW…LLRAFIKWSN (106 aa)) form the Core-binding (CB) domain. A Tyr recombinase domain is found at 268-445 (KADDCLQKEQ…PLDLLRKWHE (178 aa)). Catalysis depends on residues Arg306, Lys328, His396, Arg399, and His422. Catalysis depends on Tyr432, which acts as the O-(3'-phospho-DNA)-tyrosine intermediate.

It belongs to the 'phage' integrase family.

Its function is as follows. Integrase is necessary for integration of the phage into the host genome by site-specific recombination. In conjunction with excisionase, integrase is also necessary for excision of the prophage from the host genome. This is Prophage integrase IntF (intF) from Escherichia coli (strain K12).